The primary structure comprises 345 residues: AP2-like ethylene-responsive transcription factor At1g16060 (345 aa).

A disordered region spans residues 15-62 (TRQSKKTSVENETGDDQSATSVVLKAKRKRRSQPRDAPPQRSSVHRGV). DNA-binding regions (AP2/ERF) lie at residues 58 to 124 (VHRG…LNFP) and 160 to 218 (KYRG…TNFD). Positions 243–302 (HSDLSPFIKPNHESDLSQSQSSSEDNDDRKTKLLKSSPLVAEEVIGPSTPPEIAPPRRSF) are disordered.

This sequence belongs to the AP2/ERF transcription factor family. AP2 subfamily.

It is found in the nucleus. Its function is as follows. Probably acts as a transcriptional activator. Binds to the GCC-box pathogenesis-related promoter element. May be involved in the regulation of gene expression by stress factors and by components of stress signal transduction pathways. The chain is AP2-like ethylene-responsive transcription factor At1g16060 from Arabidopsis thaliana (Mouse-ear cress).